A 192-amino-acid polypeptide reads, in one-letter code: Chromophore lyase CpcS/CpeS 2 (192 aa).

This sequence belongs to the CpcS/CpeS biliprotein lyase family.

Covalently attaches a chromophore to Cys residue(s) of phycobiliproteins. The polypeptide is Chromophore lyase CpcS/CpeS 2 (Synechocystis sp. (strain ATCC 27184 / PCC 6803 / Kazusa)).